The chain runs to 428 residues: Adenylosuccinate synthetase (428 aa).

GTP contacts are provided by residues 12 to 18 (GDEGKGK) and 40 to 42 (GHT). Residue D13 is the Proton acceptor of the active site. Residues D13 and G40 each coordinate Mg(2+). Residues 13–16 (DEGK), 38–41 (NAGH), T130, R144, Q225, T240, and R304 contribute to the IMP site. H41 (proton donor) is an active-site residue. 300–306 (VTTGRAR) provides a ligand contact to substrate. GTP is bound by residues R306, 332-334 (KID), and 414-416 (SVG).

The protein belongs to the adenylosuccinate synthetase family. Homodimer. Mg(2+) is required as a cofactor.

Its subcellular location is the cytoplasm. It catalyses the reaction IMP + L-aspartate + GTP = N(6)-(1,2-dicarboxyethyl)-AMP + GDP + phosphate + 2 H(+). It functions in the pathway purine metabolism; AMP biosynthesis via de novo pathway; AMP from IMP: step 1/2. Plays an important role in the de novo pathway of purine nucleotide biosynthesis. Catalyzes the first committed step in the biosynthesis of AMP from IMP. The polypeptide is Adenylosuccinate synthetase (Clostridium botulinum (strain Loch Maree / Type A3)).